A 140-amino-acid polypeptide reads, in one-letter code: Baculoviral IAP repeat-containing protein 5 (140 aa).

A BIR repeat occupies 18–88 (RIATFKNWPF…KHSPGCAFLT (71 aa)). Lysine 23 carries the N6-acetyllysine modification. A Phosphothreonine; by CDK1 and CDK15 modification is found at threonine 34. At threonine 48 the chain carries Phosphothreonine. The Zn(2+) site is built by cysteine 57, cysteine 60, glutamate 76, histidine 77, histidine 80, and cysteine 84. Residues lysine 90, lysine 110, lysine 112, and lysine 115 each carry the N6-acetyllysine modification. The span at 113-129 (IAKETNNKQKEFEETAK) shows a compositional bias: basic and acidic residues. The tract at residues 113–140 (IAKETNNKQKEFEETAKTTRQSIEQLAA) is disordered. Threonine 117 carries the phosphothreonine; by AURKB modification. Lysine 129 bears the N6-acetyllysine mark. Residues 130–140 (TTRQSIEQLAA) are compositionally biased toward polar residues.

It belongs to the IAP family. Monomer or homodimer. Exists as a homodimer in the apo state and as a monomer in the CPC-bound state. The monomer protects cells against apoptosis more efficiently than the dimer. Only the dimeric form is capable of enhancing tubulin stability in cells. When phosphorylated, interacts with LAMTOR5/HBXIP; the resulting complex binds pro-CASP9, as well as active CASP9, but much less efficiently. Component of the chromosomal passenger complex (CPC) composed of at least BIRC5/survivin, CDCA8/borealin, INCENP, AURKB or AURKC; in the complex forms a triple-helix bundle-based subcomplex with INCENP and CDCA8. Interacts with JTB. Interacts (via BIR domain) with histone H3 phosphorylated at 'Thr-3' (H3pT3). Interacts with EVI5. Interacts with GTP-bound RAN in both the S and M phases of the cell cycle. Interacts with USP9X. Interacts with tubulin. Interacts with BIRC2/c-IAP1. The acetylated form at Lys-129 interacts with STAT3. The monomeric form deacetylated at Lys-129 interacts with XPO1/CRM1. The monomeric form interacts with XIAP/BIRC4. Both the dimeric and monomeric form can interact with DIABLO/SMAC. Interacts with BIRC6/bruce. Interacts with FBXL7; this interaction facilitates the polyubiquitination and subsequent proteasomal degradation of BIRC5 by the SCF(FBXL7) E3 ubiquitin-protein ligase complex. Ubiquitinated by the Cul9-RING ubiquitin-protein ligase complex, leading to its degradation. Ubiquitination is required for centrosomal targeting. Deubiquitinated by USP35 or USP38; leading to stabilization. Post-translationally, acetylation at Lys-129 results in its homodimerization, while deacetylation promotes the formation of monomers which heterodimerize with XPO1/CRM1 which facilitates its nuclear export. The acetylated form represses STAT3 transactivation. The dynamic equilibrium between its acetylation and deacetylation at Lys-129 determines its interaction with XPO1/CRM1, its subsequent subcellular localization, and its ability to inhibit STAT3 transactivation. In terms of processing, in vitro phosphorylation at Thr-117 by AURKB prevents interaction with INCENP and localization to mitotic chromosomes. Phosphorylation at Thr-48 by CK2 is critical for its mitotic and anti-apoptotic activities. Phosphorylation at Thr-34 by CDK15 is critical for its anti-apoptotic activity.

It is found in the cytoplasm. Its subcellular location is the nucleus. It localises to the chromosome. The protein resides in the centromere. The protein localises to the cytoskeleton. It is found in the spindle. Its subcellular location is the kinetochore. It localises to the midbody. Its function is as follows. Multitasking protein that has dual roles in promoting cell proliferation and preventing apoptosis. Component of a chromosome passage protein complex (CPC) which is essential for chromosome alignment and segregation during mitosis and cytokinesis. Acts as an important regulator of the localization of this complex; directs CPC movement to different locations from the inner centromere during prometaphase to midbody during cytokinesis and participates in the organization of the center spindle by associating with polymerized microtubules. Involved in the recruitment of CPC to centromeres during early mitosis via association with histone H3 phosphorylated at 'Thr-3' (H3pT3) during mitosis. The complex with RAN plays a role in mitotic spindle formation by serving as a physical scaffold to help deliver the RAN effector molecule TPX2 to microtubules. May counteract a default induction of apoptosis in G2/M phase. The acetylated form represses STAT3 transactivation of target gene promoters. May play a role in neoplasia. Inhibitor of CASP3 and CASP7. Essential for the maintenance of mitochondrial integrity and function. This is Baculoviral IAP repeat-containing protein 5 (Birc5) from Mus musculus (Mouse).